The primary structure comprises 44 residues: uncharacterized protein (44 aa).

The helical transmembrane segment at 4 to 24 threads the bilayer; that stretch reads ISSILIRGGGVLIVVILLLWI.

The protein localises to the membrane. This is an uncharacterized protein from Ornithodoros (relapsing fever ticks).